We begin with the raw amino-acid sequence, 255 residues long: NAD kinase (255 aa).

D44 (proton acceptor) is an active-site residue. Residues 44-45, 114-115, D144, A152, and 155-160 contribute to the NAD(+) site; these read DG, NE, and TAYNLS.

It belongs to the NAD kinase family. A divalent metal cation is required as a cofactor.

It localises to the cytoplasm. The enzyme catalyses NAD(+) + ATP = ADP + NADP(+) + H(+). Functionally, involved in the regulation of the intracellular balance of NAD and NADP, and is a key enzyme in the biosynthesis of NADP. Catalyzes specifically the phosphorylation on 2'-hydroxyl of the adenosine moiety of NAD to yield NADP. The polypeptide is NAD kinase (Hyphomonas neptunium (strain ATCC 15444)).